The chain runs to 116 residues: Large ribosomal subunit protein bL20 (116 aa).

It belongs to the bacterial ribosomal protein bL20 family.

In terms of biological role, binds directly to 23S ribosomal RNA and is necessary for the in vitro assembly process of the 50S ribosomal subunit. It is not involved in the protein synthesizing functions of that subunit. This chain is Large ribosomal subunit protein bL20, found in Bacteroides fragilis (strain ATCC 25285 / DSM 2151 / CCUG 4856 / JCM 11019 / LMG 10263 / NCTC 9343 / Onslow / VPI 2553 / EN-2).